The sequence spans 344 residues: Envelope glycoprotein M (344 aa).

Over 1–12 the chain is Intravirion; it reads MASSRVDTINLR. The helical transmembrane segment at 13 to 33 threads the bilayer; the sequence is IWLVSIICAALSFINVTVHLI. Residues 34–76 lie on the Virion surface side of the membrane; sequence AINFPNLGFPCAYFEINDLKAVNLSANNEIYQMTHQLYINPVQ. The chain crosses the membrane as a helical span at residues 77–97; that stretch reads IICYVLIMAILFLLIIIYYIV. Topologically, residues 98–125 are intravirion; sequence CCAKVFSSNKTSNVNQTTRDITWMGDTS. Residues 126-146 traverse the membrane as a helical segment; sequence SCFQFILIMDTFQLFVTALSF. A topological domain (virion surface) is located at residue arginine 147. Residues 148-168 form a helical membrane-spanning segment; that stretch reads LVALGAFAYSIFFVCFTTFNV. The Intravirion portion of the chain corresponds to 169-203; the sequence is TLITQFQSADKSFFAFQKIHPNLKGTVQFKTVVIN. A helical membrane pass occupies residues 204–224; the sequence is LSELMLGYSTMFLGITTCLGV. The Virion surface portion of the chain corresponds to 225–238; the sequence is GNSIYIRSITVAFS. Residues 239–259 traverse the membrane as a helical segment; that stretch reads SINTFLVMACIYSIVIEAVLV. Over 260–263 the chain is Intravirion; it reads RYVK. A helical membrane pass occupies residues 264–284; it reads PLFGYYVGMFCGAVGLSFPIL. Residues 285 to 293 lie on the Virion surface side of the membrane; the sequence is QYETFFESE. Residues 294–314 traverse the membrane as a helical segment; sequence WSTGLIINLSVVAIISIGFII. Over 315–344 the chain is Intravirion; that stretch reads CRLVRYLVKKKRRYKQLLNAESSSLMDENE.

This sequence belongs to the herpesviridae glycoprotein M family. Interacts (via N-terminus) with gN (via N-terminus). The gM-gN heterodimer forms the gCII complex.

It is found in the virion membrane. Its subcellular location is the host Golgi apparatus. It localises to the host trans-Golgi network. The protein localises to the host endosome membrane. The protein resides in the host nucleus inner membrane. In terms of biological role, envelope glycoprotein important for virion assembly and egress. Plays a role in the correct incorporation of gH-gL into virion membrane. Directs the glycoprotein N (gN) to the host trans-Golgi network. This chain is Envelope glycoprotein M, found in Homo sapiens (Human).